The primary structure comprises 287 residues: 2-dehydro-3-deoxyphosphooctonate aldolase (287 aa).

It belongs to the KdsA family.

It is found in the cytoplasm. The enzyme catalyses D-arabinose 5-phosphate + phosphoenolpyruvate + H2O = 3-deoxy-alpha-D-manno-2-octulosonate-8-phosphate + phosphate. Its pathway is carbohydrate biosynthesis; 3-deoxy-D-manno-octulosonate biosynthesis; 3-deoxy-D-manno-octulosonate from D-ribulose 5-phosphate: step 2/3. It functions in the pathway bacterial outer membrane biogenesis; lipopolysaccharide biosynthesis. This is 2-dehydro-3-deoxyphosphooctonate aldolase from Rhodopseudomonas palustris (strain ATCC BAA-98 / CGA009).